The following is a 705-amino-acid chain: Translation initiation factor IF-2 (705 aa).

A disordered region spans residues 40-124 (DDQIKALDKK…QPAAPKEIPS (85 aa)). The segment covering 41–58 (DQIKALDKKFKKEQKNDN) has biased composition (basic and acidic residues). Residues 59–77 (KQSTQNNHQKSNNQNQNKG) show a composition bias toward low complexity. Positions 94-108 (KGNKKNNRNNKKNNK) are enriched in basic residues. The 170-residue stretch at 207-376 (ERPAVVTIMG…GLVAEVQELK (170 aa)) folds into the tr-type G domain. The interval 216–223 (GHVDHGKT) is G1. 216-223 (GHVDHGKT) is a GTP binding site. The segment at 241-245 (GITQH) is G2. Positions 262-265 (DTPG) are G3. GTP-binding positions include 262 to 266 (DTPGH) and 316 to 319 (NKID). Residues 316-319 (NKID) are G4. Residues 352 to 354 (SAL) form a G5 region.

This sequence belongs to the TRAFAC class translation factor GTPase superfamily. Classic translation factor GTPase family. IF-2 subfamily.

It is found in the cytoplasm. Functionally, one of the essential components for the initiation of protein synthesis. Protects formylmethionyl-tRNA from spontaneous hydrolysis and promotes its binding to the 30S ribosomal subunits. Also involved in the hydrolysis of GTP during the formation of the 70S ribosomal complex. This is Translation initiation factor IF-2 from Staphylococcus aureus (strain Mu3 / ATCC 700698).